Consider the following 305-residue polypeptide: Homoserine O-acetyltransferase (305 aa).

Cys-142 functions as the Acyl-thioester intermediate in the catalytic mechanism. Substrate-binding residues include Lys-163 and Ser-192. The active-site Proton acceptor is His-235. Glu-237 is a catalytic residue. Position 249 (Arg-249) interacts with substrate.

It belongs to the MetA family.

It localises to the cytoplasm. The enzyme catalyses L-homoserine + acetyl-CoA = O-acetyl-L-homoserine + CoA. It participates in amino-acid biosynthesis; L-methionine biosynthesis via de novo pathway; O-acetyl-L-homoserine from L-homoserine: step 1/1. Its function is as follows. Transfers an acetyl group from acetyl-CoA to L-homoserine, forming acetyl-L-homoserine. This Roseobacter denitrificans (strain ATCC 33942 / OCh 114) (Erythrobacter sp. (strain OCh 114)) protein is Homoserine O-acetyltransferase.